A 304-amino-acid chain; its full sequence is Homoserine kinase (304 aa).

90–100 (PLARGLGSSAS) contributes to the ATP binding site.

It belongs to the GHMP kinase family. Homoserine kinase subfamily.

The protein localises to the cytoplasm. The enzyme catalyses L-homoserine + ATP = O-phospho-L-homoserine + ADP + H(+). It functions in the pathway amino-acid biosynthesis; L-threonine biosynthesis; L-threonine from L-aspartate: step 4/5. In terms of biological role, catalyzes the ATP-dependent phosphorylation of L-homoserine to L-homoserine phosphate. The protein is Homoserine kinase of Staphylococcus aureus (strain NCTC 8325 / PS 47).